The following is a 618-amino-acid chain: DELLA protein SLN1 (618 aa).

The segment at 1–36 is disordered; that stretch reads MKREYQDGGGSGGGGDEMGSSRDKMMVSSSEAGEGE. Gly residues predominate over residues 7–17; that stretch reads DGGGSGGGGDE. A DELLA motif motif is present at residues 39–43; the sequence is DELLA. Disordered regions lie at residues 106–137 and 159–197; these read LNAPPPPLPPAPPQLNASTSSTVTGGGGYFDL and APADLSADSVRDPKRMRTGGSSTSSSSSSSSSLGGGAAR. Over residues 108 to 118 the composition is skewed to pro residues; that stretch reads APPPPLPPAPP. 2 stretches are compositionally biased toward low complexity: residues 119–128 and 176–197; these read QLNASTSSTV and TGGSSTSSSSSSSSSLGGGAAR. The GRAS domain maps to 221 to 614; sequence VDTQEAGIRL…RPLIATSAWR (394 aa). The interval 228 to 284 is leucine repeat I (LRI); sequence IRLVHALLACAEAVQQENLSAAEALVKQIPLLAASQGGAMRKVAAYFGEALARRVFR. The short motif at 235–239 is the LxCxE motif element; the sequence is LACAE. A VHIID region spans residues 303–368; it reads HAHFYESCPY…GGPPSFRLTG (66 aa). The VHIID signature appears at 334–338; the sequence is VHVVD. The leucine repeat II (LRII) stretch occupies residues 382-421; that stretch reads QVGWKLAQFAHTIRVDFQYRGLVAATLADLEPFMLQPEGE. Residues 431-535 are PFYRE; sequence IAVNSVFEMH…EVYLGRQICN (105 aa). The interval 538 to 614 is SAW; sequence ACEGTERTER…RPLIATSAWR (77 aa).

The protein belongs to the GRAS family. DELLA subfamily. Post-translationally, phosphorylated. Ubiquitinated. Upon GA application it is ubiquitinated, leading to its subsequent degradation. Apparently restricted to regions where growth is occurring in the leaf blade. Localizes almost exclusively to the basal elongation zone (EZ) for the elongating blades of L1, L2 and L3. More detailed fractionation of the L3 blade shows that in cv. Himalaya, it is preferentially localized to the basal third of the EZ, but its presence can still be detected toward the end of the EZ (at protein level).

The protein localises to the nucleus. Probable transcriptional regulator that acts as a repressor of the gibberellin (GA) signaling pathway. Probably acts by participating in large multiprotein complexes that repress transcription of GA-inducible genes. Upon GA application, it is degraded by the proteasome, allowing the GA signaling pathway. Acts as a negative regulator of GAMYB gene expression. This Hordeum vulgare (Barley) protein is DELLA protein SLN1 (SLN1).